We begin with the raw amino-acid sequence, 327 residues long: Methionyl-tRNA formyltransferase (327 aa).

113-116 (SILP) is a (6S)-5,6,7,8-tetrahydrofolate binding site.

It belongs to the Fmt family.

The catalysed reaction is L-methionyl-tRNA(fMet) + (6R)-10-formyltetrahydrofolate = N-formyl-L-methionyl-tRNA(fMet) + (6S)-5,6,7,8-tetrahydrofolate + H(+). Its function is as follows. Attaches a formyl group to the free amino group of methionyl-tRNA(fMet). The formyl group appears to play a dual role in the initiator identity of N-formylmethionyl-tRNA by promoting its recognition by IF2 and preventing the misappropriation of this tRNA by the elongation apparatus. The chain is Methionyl-tRNA formyltransferase from Colwellia psychrerythraea (strain 34H / ATCC BAA-681) (Vibrio psychroerythus).